The following is a 285-amino-acid chain: NADPH-dependent 7-cyano-7-deazaguanine reductase (285 aa).

91–93 (IES) serves as a coordination point for substrate. NADPH is bound at residue 93–94 (SK). The active-site Thioimide intermediate is the Cys193. The Proton donor role is filled by Asp200. Substrate is bound at residue 232–233 (HE). 261 to 262 (RG) is a binding site for NADPH.

The protein belongs to the GTP cyclohydrolase I family. QueF type 2 subfamily. Homodimer.

The protein resides in the cytoplasm. The enzyme catalyses 7-aminomethyl-7-carbaguanine + 2 NADP(+) = 7-cyano-7-deazaguanine + 2 NADPH + 3 H(+). It functions in the pathway tRNA modification; tRNA-queuosine biosynthesis. In terms of biological role, catalyzes the NADPH-dependent reduction of 7-cyano-7-deazaguanine (preQ0) to 7-aminomethyl-7-deazaguanine (preQ1). The polypeptide is NADPH-dependent 7-cyano-7-deazaguanine reductase (Shewanella baltica (strain OS223)).